The sequence spans 587 residues: Synaptotagmin-3 (587 aa).

At 1-54 (MSGDYEDDLCRRALILVSDLCARVRDADTNDRCQEFNELRIRGYPRGPDADISV) the chain is on the vesicular side. Residues 10–34 (CRRALILVSDLCARVRDADTNDRCQ) are cysteine motif. The helical transmembrane segment at 55–75 (SLLSVIVTFCGIVLLGVSLFV) threads the bilayer. Over 76–587 (SWKLCWVPWR…KGLSEKENSE (512 aa)) the chain is Cytoplasmic. The segment covering 183–205 (PSQTSPELPSEGGTGSGLLLLPP) has biased composition (low complexity). Residues 183-258 (PSQTSPELPS…EERPPALPLP (76 aa)) form a disordered region. The span at 213–224 (AQSHQQVTSLAP) shows a compositional bias: polar residues. The segment covering 229 to 244 (PALPRPLTQQTLTTQA) has biased composition (low complexity). Arginine 286 carries the post-translational modification Omega-N-methylarginine. C2 domains lie at 296–417 (PCGR…PLWR) and 428–562 (DLGE…EHWH). Residues aspartate 327, aspartate 333, aspartate 385, phenylalanine 386, aspartate 387, serine 390, aspartate 393, aspartate 459, aspartate 465, aspartate 519, and aspartate 521 each coordinate Ca(2+).

It belongs to the synaptotagmin family. As to quaternary structure, homodimer; disulfide-linked via the cysteine motif. Can also form heterodimers with SYT6, SYT9 and SYT10. It depends on Ca(2+) as a cofactor.

The protein resides in the cell membrane. It localises to the cytoplasmic vesicle. Its subcellular location is the secretory vesicle membrane. Functionally, ca(2+) sensor involved in Ca(2+)-dependent exocytosis of secretory vesicles through Ca(2+) and phospholipid binding to the C2 domain. Ca(2+) induces binding of the C2-domains to phospholipid membranes and to assembled SNARE-complexes; both actions contribute to triggering exocytosis. Plays a role in dendrite formation by melanocytes. This is Synaptotagmin-3 (Syt3) from Mus musculus (Mouse).